Reading from the N-terminus, the 362-residue chain is 2-oxoglutarate-dependent dioxygenase lolO1 (362 aa).

The Fe2OG dioxygenase domain occupies 199–312; it reads TWNYFLGQPV…RYSLVFFGHL (114 aa). Fe cation contacts are provided by His-222, Asp-224, and His-280. Arg-303 serves as a coordination point for 2-oxoglutarate.

The protein belongs to the iron/ascorbate-dependent oxidoreductase family. It depends on Fe(2+) as a cofactor.

The protein operates within alkaloid biosynthesis. Functionally, 2-oxoglutarate-dependent dioxygenase; part of the gene cluster that mediates the biosynthesis of loline alkaloids, potent insecticidal agents composed of a pyrrolizidine ring system and an uncommon ether bridge linking carbons 2 and 7. Lolines are structurally differentiated by the various modifications of the L-amino group and include norloline, loline, N-methylloline, N-acetylloline, N-acetylnorloline, and N-formylloline. The first committed step is the condensation of O-acetyl-L-homoserine (derived from L-aspartic acid) and L-proline, probably catalyzed by the gamma-type pyridoxal 5'-phosphate(PLP)-dependent enzyme lolC, to give the diamino diacid, NACPP. Ensuing cyclization, decarboxylation, and acetylation steps yield 1-exo-acetamidopyrrolizidine (AcAP). LolO is required for installation of the ether bridge upon the pathway intermediate, 1-exo-acetamidopyrrolizidine (AcAP). In sequential 2-oxoglutarate- and O(2)-consuming steps, lolO removes hydrogens from C2 and C7 of AcAP to form both carbon-oxygen bonds in N-acetylnorloline (NANL), the precursor to all other lolines. The enzymes lolD, lolE, lolF and lolT have also been proposed to be involved in the ether-bridge installation. Further processing of the exocyclic moiety of NANL by fungal N-acetamidase (LolN), methyltransferase (LolM), and cytochrome P450 (LolP) enzymes, with occasional involvement of a plant acetyltransferase, generates the other known lolines. LolN transforms NANL to norlonine which is monomethylated and dimethylated to respectively lonine and N-methyllonine (NML) by lolM. LolP catalyzes hydroxylation of the methyl group in N-methylloline (NML) and further oxygenation to N-formylloline (NFL). A plant acetyltransferase is responsible for the acetylation of loline to form N-acetylloline (NAL). LolA might interact with aspartate kinase to prevent feedback inhibition of its activity by these end products and thereby promote production of l-homoserine from l-aspartate. The sequence is that of 2-oxoglutarate-dependent dioxygenase lolO1 from Epichloe uncinata (Endophyte fungus).